A 215-amino-acid chain; its full sequence is Protein-L-isoaspartate O-methyltransferase (215 aa).

Residue Ser-62 is part of the active site.

Belongs to the methyltransferase superfamily. L-isoaspartyl/D-aspartyl protein methyltransferase family.

It localises to the cytoplasm. It carries out the reaction [protein]-L-isoaspartate + S-adenosyl-L-methionine = [protein]-L-isoaspartate alpha-methyl ester + S-adenosyl-L-homocysteine. Functionally, catalyzes the methyl esterification of L-isoaspartyl residues in peptides and proteins that result from spontaneous decomposition of normal L-aspartyl and L-asparaginyl residues. It plays a role in the repair and/or degradation of damaged proteins. This Rhodopseudomonas palustris (strain BisA53) protein is Protein-L-isoaspartate O-methyltransferase.